We begin with the raw amino-acid sequence, 276 residues long: MQVQFSKMHGLGNDFVVIDNVTQNVFFSKEKISQLADRNFGIGFDQLLVVEPPYDPEQDFHYRIFNSDGSEVSQCGNGARCFARFVKMKGLTNRNKIVVSTKAGRIVLYHERDGQITVNMGEPIFEPAKIPLKANKQENIYIIRENDHTFFCGAVSMGNPHCVLLVDDVETADVEGIGKTLVAHERFPEGANIGFMQILNSGHIKLRVYERGVGETLACGSGACAAVAVGQMQKKLNKEVTVDLPGGTLKIRWQGPGSILKMTGTAEHVFDGNITL.

Residues asparagine 13, glutamine 46, and asparagine 66 each contribute to the substrate site. The active-site Proton donor is the cysteine 75. Residues 76 to 77, asparagine 159, asparagine 192, and 210 to 211 each bind substrate; these read GN and ER. The active-site Proton acceptor is the cysteine 219. Position 220–221 (220–221) interacts with substrate; it reads GS.

Belongs to the diaminopimelate epimerase family. In terms of assembly, homodimer.

The protein resides in the cytoplasm. The enzyme catalyses (2S,6S)-2,6-diaminopimelate = meso-2,6-diaminopimelate. It participates in amino-acid biosynthesis; L-lysine biosynthesis via DAP pathway; DL-2,6-diaminopimelate from LL-2,6-diaminopimelate: step 1/1. Functionally, catalyzes the stereoinversion of LL-2,6-diaminopimelate (L,L-DAP) to meso-diaminopimelate (meso-DAP), a precursor of L-lysine and an essential component of the bacterial peptidoglycan. This is Diaminopimelate epimerase from Pseudoalteromonas atlantica (strain T6c / ATCC BAA-1087).